A 207-amino-acid chain; its full sequence is Heat shock protein beta-1 (207 aa).

Arg-12 is modified (omega-N-methylarginine). Ser-13 carries the phosphoserine modification. Ser-15 is subject to Phosphoserine; by MAPKAPK2 and MAPKAPK3. Ser-27 bears the Phosphoserine mark. An interaction with TGFB1I1 region spans residues 72 to 207; the sequence is APAYSRLLSR…AGKSEKPGTK (136 aa). A sHSP domain is found at 78-186; it reads LLSRQLSSGV…QSAEITIPVT (109 aa). Phosphoserine; by MAPKAPK2, MAPKAPK3 and MAPKAPK5 occurs at positions 80 and 84. Ser-85, Ser-88, and Ser-100 each carry phosphoserine. An N6-acetyllysine modification is found at Lys-125. The interval 151–181 is disordered; sequence DPTQVSSSLSPEGTLSVEAPLPKPATQSAEI. Over residues 153–163 the composition is skewed to polar residues; it reads TQVSSSLSPEG. The residue at position 176 (Thr-176) is a Phosphothreonine. Phosphoserine is present on residues Ser-178 and Ser-201.

The protein belongs to the small heat shock protein (HSP20) family. Homooligomer. Homodimer; becomes monomeric upon activation. Heterooligomer; with HSPB6. Associates with alpha- and beta-tubulin. Interacts with TGFB1I1. Interacts with CRYAB. Interacts with HSPB8. Interacts with HSPBAP1. In terms of processing, phosphorylated upon exposure to protein kinase C activators and heat shock. Phosphorylation by MAPKAPK2 and MAPKAPK3 in response to stress dissociates HSPB1 from large small heat-shock protein (sHsps) oligomers and impairs its chaperone activity and ability to protect against oxidative stress effectively. Phosphorylation by MAPKAPK5 in response to PKA stimulation induces F-actin rearrangement.

The protein localises to the cytoplasm. It is found in the nucleus. The protein resides in the cytoskeleton. Its subcellular location is the spindle. Its function is as follows. Small heat shock protein which functions as a molecular chaperone probably maintaining denatured proteins in a folding-competent state. Plays a role in stress resistance and actin organization. Through its molecular chaperone activity may regulate numerous biological processes including the phosphorylation and the axonal transport of neurofilament proteins. The protein is Heat shock protein beta-1 (HSPB1) of Sus scrofa (Pig).